The sequence spans 340 residues: Guanine nucleotide-binding protein G(I)/G(S)/G(T) subunit beta-3 (340 aa).

WD repeat units lie at residues 53 to 83, 95 to 125, 141 to 170, 182 to 212, 224 to 254, 268 to 298, and 310 to 340; these read GHLA…IVWD, LRSS…SIYS, AHTG…ALWD, GHTG…KLWD, GHES…RLFD, SIIC…NIWD, and GHDN…KVWN.

This sequence belongs to the WD repeat G protein beta family. As to quaternary structure, g proteins are composed of 3 units, alpha, beta and gamma. Interacts with RASD2.

Its subcellular location is the cytoplasm. The protein resides in the perinuclear region. Functionally, guanine nucleotide-binding proteins (G proteins) are involved as a modulator or transducer in various transmembrane signaling systems. The beta and gamma chains are required for the GTPase activity, for replacement of GDP by GTP, and for G protein-effector interaction. The polypeptide is Guanine nucleotide-binding protein G(I)/G(S)/G(T) subunit beta-3 (GNB3) (Canis lupus familiaris (Dog)).